A 271-amino-acid chain; its full sequence is L-aspartate dehydrogenase (271 aa).

NAD(+)-binding residues include Ala-124 and Asn-192. The active site involves His-222.

This sequence belongs to the L-aspartate dehydrogenase family.

It carries out the reaction L-aspartate + NADP(+) + H2O = oxaloacetate + NH4(+) + NADPH + H(+). It catalyses the reaction L-aspartate + NAD(+) + H2O = oxaloacetate + NH4(+) + NADH + H(+). The protein operates within cofactor biosynthesis; NAD(+) biosynthesis; iminoaspartate from L-aspartate (dehydrogenase route): step 1/1. In terms of biological role, specifically catalyzes the NAD or NADP-dependent dehydrogenation of L-aspartate to iminoaspartate. This is L-aspartate dehydrogenase from Methanosarcina barkeri (strain Fusaro / DSM 804).